The primary structure comprises 206 residues: Large ribosomal subunit protein uL4 (206 aa).

The disordered stretch occupies residues 48–97; the sequence is THAVKNRSLVSGGGKKPWKQKHTGRARQGSTRASQWVGGGKAMGPKPRDY. Over residues 63–72 the composition is skewed to basic residues; that stretch reads KPWKQKHTGR.

It belongs to the universal ribosomal protein uL4 family. In terms of assembly, part of the 50S ribosomal subunit.

Functionally, one of the primary rRNA binding proteins, this protein initially binds near the 5'-end of the 23S rRNA. It is important during the early stages of 50S assembly. It makes multiple contacts with different domains of the 23S rRNA in the assembled 50S subunit and ribosome. Forms part of the polypeptide exit tunnel. In Anaeromyxobacter sp. (strain K), this protein is Large ribosomal subunit protein uL4.